A 291-amino-acid chain; its full sequence is MGQKVHPYSLRVKINKDWKSKWYFDKKLYSTILHEDFLIRLEIMKFLKGIKFDISDIEIIRNNPQKVTVVIVTPRPGSVIGLKGSNLEKIGQLLTKKISKKISIKIKEVKRPELDAQIIANGIAKQVENRVSYRKVLKSALSTSMLKGAQGLKIKIAGRLGGAEIARSFEVKEGRVPLHTLRANIDYGFSEAHTTYGIIGVKVWLFKGEVLGRQTNSDAGQVINKKPFRERGETVKNFDKILNNREKINEKQTRALNKKDGLSKDEASLLNKLSSSFSKERVDSNEQNIGG.

In terms of domain architecture, KH type-2 spans 39–110 (IRLEIMKFLK…KISIKIKEVK (72 aa)).

This sequence belongs to the universal ribosomal protein uS3 family. As to quaternary structure, part of the 30S ribosomal subunit. Forms a tight complex with proteins S10 and S14.

Its function is as follows. Binds the lower part of the 30S subunit head. Binds mRNA in the 70S ribosome, positioning it for translation. The sequence is that of Small ribosomal subunit protein uS3 from Borreliella afzelii (strain PKo) (Borrelia afzelii).